Reading from the N-terminus, the 395-residue chain is Chalcone synthase 3 (395 aa).

N-acetylvaline is present on valine 2. The active site involves cysteine 169.

The protein belongs to the thiolase-like superfamily. Chalcone/stilbene synthases family.

It carries out the reaction (E)-4-coumaroyl-CoA + 3 malonyl-CoA + 3 H(+) = 2',4,4',6'-tetrahydroxychalcone + 3 CO2 + 4 CoA. It participates in secondary metabolite biosynthesis; flavonoid biosynthesis. Its function is as follows. The primary product of this enzyme is 4,2',4',6'-tetrahydroxychalcone (also termed naringenin-chalcone or chalcone) which can under specific conditions spontaneously isomerize into naringenin. This chain is Chalcone synthase 3 (CHS3), found in Sinapis alba (White mustard).